A 580-amino-acid polypeptide reads, in one-letter code: MDVTKSLLCFISFVAFLLFSSVAEANKAHHHEFIIQATKVKRLCETHNSITVNGMFPGPMLVVNNGDTLVVKVINRARYNITIHWHGVRQMRTGWADGPEFVTQCPIRPGSSYTYRFTIQGQEGTLWWHAHSSWLRATVYGSLLVFPPAGSSYPFTKPHRNVPLLLGEWWDANPVDVLRESIRTGGAPNNSDAYTINGQPGDLYKCSSQDTTVVPINVGETILLRVINSALNQPLFFTVANHKLTVVGADASYLKPFTTNVIVLGPGQTTDVLITGDQPPNRYYMAARAYQSAQNAPFGNTTTTAILQYKSAPCCGVGGGSGTKKGNSFKPIMPILPAYNDTNTVTRFSQSFRSLRRAEVPTEIDENLFVTIGLGLNNCPKNFRSRRCQGPNGTRFTASMNNVSFALPSNYSLLQAHHHGIPGVFTTDFPAKPPVKFDYTGNNISRSLYQPDRGTKLYKLKYGSRVQIVLQDTGIVTPENHPIHLHGYDFYIIAEGFGNFNPKKDTAKFNLEDPPLRNTVGVPVNGWAVIRFIADNPGVWIMHCHLDAHISWGLAMAFLVENGNGVLQTIEQPPHDLPVC.

Positions 1–25 (MDVTKSLLCFISFVAFLLFSSVAEA) are cleaved as a signal peptide. Plastocyanin-like domains are found at residues 34-150 (IIQA…PPAG) and 160-312 (RNVP…YKSA). N-linked (GlcNAc...) asparagine glycosylation is present at asparagine 80. The Cu cation site is built by histidine 84, histidine 86, histidine 129, and histidine 131. N-linked (GlcNAc...) asparagine glycosylation is found at asparagine 189, asparagine 300, asparagine 340, asparagine 392, asparagine 402, asparagine 410, and asparagine 443. Residues 428–564 (DFPAKPPVKF…AMAFLVENGN (137 aa)) enclose the Plastocyanin-like 3 domain. Cu cation contacts are provided by histidine 481, histidine 484, histidine 486, histidine 543, cysteine 544, histidine 545, and histidine 549.

It belongs to the multicopper oxidase family. Requires Cu cation as cofactor. In terms of tissue distribution, ubiquitous and constitutive.

Its subcellular location is the secreted. It localises to the extracellular space. The protein localises to the apoplast. The catalysed reaction is 4 hydroquinone + O2 = 4 benzosemiquinone + 2 H2O. In terms of biological role, lignin degradation and detoxification of lignin-derived products. This is Laccase-5 (LAC5) from Arabidopsis thaliana (Mouse-ear cress).